Reading from the N-terminus, the 209-residue chain is Glycerol-3-phosphate acyltransferase (209 aa).

The next 5 membrane-spanning stretches (helical) occupy residues 8-28 (NVLFYITAYLVGGIPFGYILA), 78-98 (VLVLIAKLLGFPPATWWLIGI), 124-144 (VLLVLLPVETIIGIVTWLIVA), 149-169 (ISSLSSLSGLVALVVASFIVH), and 170-190 (PDMPYVHSHAPLLLLAFIIFY).

The protein belongs to the PlsY family. Probably interacts with PlsX.

It is found in the cell inner membrane. The catalysed reaction is an acyl phosphate + sn-glycerol 3-phosphate = a 1-acyl-sn-glycero-3-phosphate + phosphate. It participates in lipid metabolism; phospholipid metabolism. Its function is as follows. Catalyzes the transfer of an acyl group from acyl-phosphate (acyl-PO(4)) to glycerol-3-phosphate (G3P) to form lysophosphatidic acid (LPA). This enzyme utilizes acyl-phosphate as fatty acyl donor, but not acyl-CoA or acyl-ACP. This chain is Glycerol-3-phosphate acyltransferase, found in Nitratiruptor sp. (strain SB155-2).